The following is a 289-amino-acid chain: Inorganic pyrophosphatase (289 aa).

Ser-2 is modified (N-acetylserine). Position 57 is an N6-acetyllysine (Lys-57). Positions 116, 121, and 153 each coordinate Mg(2+). Ser-250 carries the post-translational modification Phosphoserine.

This sequence belongs to the PPase family. As to quaternary structure, homodimer. Requires Mg(2+) as cofactor. The N-terminus is blocked. As to expression, highest levels are found in retinal rod outer segments.

It is found in the cytoplasm. The catalysed reaction is diphosphate + H2O = 2 phosphate + H(+). This chain is Inorganic pyrophosphatase (PPA1), found in Bos taurus (Bovine).